The primary structure comprises 372 residues: MPTMWPLWLLASLLALSQALPFEQKGFWDFTLDDGLPMLNDEEASGADTTSGIPDLDSLTPTFSAMCPFGCHCHLRVVQCSDLGLKAVPKEISPDTTLLDLQNNEISELRKDDFKGLQHLYALVLVNNKISKIHEKAFSPLRKLQKLYISKNHLVEIPPNLPSSLVELRIHDNRIRKVPKGVFSGLRNMNCIEMGGNPLENSGFQPGAFDGLKLNYLRISEAKLTGIPKDLPETLNELHLDHNKIQAIELEDLLRYSKLYRLGLGHNQIRMIENGSLSFLPTLRELHLDNNKLSRVPAGLPDLKLLQVVYLHTNNITKVGVNDFCPVGFGVKRAYYNGISLFNNPVPYWEVQPATFRCVTDRLAIQFGNYKK.

The first 19 residues, 1 to 19, serve as a signal peptide directing secretion; it reads MPTMWPLWLLASLLALSQA. The propeptide occupies 20-40; the sequence is LPFEQKGFWDFTLDDGLPMLN. Ser45 and Ser51 each carry an O-linked (Xyl...) (glycosaminoglycan) serine glycan. Cystine bridges form between Cys67/Cys73 and Cys71/Cys80. 12 LRR repeats span residues 86–106, 107–130, 131–154, 155–175, 176–199, 200–224, 225–245, 246–269, 270–293, 294–316, 317–346, and 347–372; these read KAVPKEISPDTTLLDLQNNEI, SELRKDDFKGLQHLYALVLVNNKI, SKIHEKAFSPLRKLQKLYISKNHL, VEIPPNLPSSLVELRIHDNRI, RKVPKGVFSGLRNMNCIEMGGNPL, ENSGFQPGAFDGLKLNYLRISEAKL, TGIPKDLPETLNELHLDHNKI, QAIELEDLLRYSKLYRLGLGHNQI, RMIENGSLSFLPTLRELHLDNNKL, SRVPAGLPDLKLLQVVYLHTNNI, TKVGVNDFCPVGFGVKRAYYNGISLFNNPV, and PYWEVQPATFRCVTDRLAIQFGNYKK. Asn274 and Asn315 each carry an N-linked (GlcNAc...) asparagine glycan. Cys325 and Cys358 are oxidised to a cystine.

Belongs to the small leucine-rich proteoglycan (SLRP) family. SLRP class I subfamily. As to quaternary structure, homodimer. Forms a ternary complex with MFAP2 and ELN. The two attached glycosaminoglycan chains can be either chondroitin sulfate or dermatan sulfate.

It is found in the secreted. It localises to the extracellular space. The protein localises to the extracellular matrix. In terms of biological role, may be involved in collagen fiber assembly. This chain is Biglycan (BGN), found in Equus caballus (Horse).